The following is a 699-amino-acid chain: Keratinocyte proline-rich protein (699 aa).

Position 436 is a phosphoserine (S436). Pro residues-rich tracts occupy residues 448 to 477 (PYPR…PSPE) and 513 to 533 (DPCP…PSPE). The disordered stretch occupies residues 448-533 (PYPRPEPCPS…PCPEPCPSPE (86 aa)).

In terms of tissue distribution, expressed in the stratified squamous epithelial layers of the skin, esophagus and tongue.

The protein localises to the cytoplasm. This Rattus norvegicus (Rat) protein is Keratinocyte proline-rich protein (Kprp).